Reading from the N-terminus, the 192-residue chain is Thiosulfate reductase electron transfer subunit PhsB (192 aa).

4Fe-4S ferredoxin-type domains are found at residues 8–36 (YVML…VPEG), 55–86 (THFQ…RDEN), and 87–116 (GIVQ…LNPQ). Residues cysteine 17, cysteine 20, cysteine 23, cysteine 27, cysteine 64, cysteine 67, cysteine 72, cysteine 76, cysteine 96, cysteine 99, cysteine 102, cysteine 106, cysteine 123, cysteine 126, cysteine 139, and cysteine 143 each coordinate [4Fe-4S] cluster.

In terms of assembly, composed of three subunits: PhsA, PhsB and PhsC. Requires [4Fe-4S] cluster as cofactor.

It localises to the cell inner membrane. Functionally, component of the PhsABC thiosulfate reductase that catalyzes the reduction of thiosulfate to sulfite and hydrogen sulfide, with menaquinol as the sole electron donor. Proton motive force (PMF) is required to drive transmembrane electron transfer within the reductase. The PhsB subunit transfers electrons between PhsC and PhsA. The polypeptide is Thiosulfate reductase electron transfer subunit PhsB (phsB) (Salmonella typhi).